Here is a 723-residue protein sequence, read N- to C-terminus: Tryptophan 2-monooxygenase (723 aa).

4 residues coordinate FMN: Ser-218, Glu-238, Arg-246, and Arg-266. A substrate-binding site is contributed by Arg-266.

This sequence belongs to the tryptophan 2-monooxygenase family. FMN is required as a cofactor.

The enzyme catalyses L-tryptophan + O2 = indole-3-acetamide + CO2 + H2O. The protein operates within plant hormone metabolism; auxin biosynthesis. The polypeptide is Tryptophan 2-monooxygenase (iaaM) (Allorhizobium ampelinum (strain ATCC BAA-846 / DSM 112012 / S4) (Agrobacterium vitis (strain S4))).